The chain runs to 320 residues: Lipoyl synthase (320 aa).

Cys67, Cys72, Cys78, Cys93, Cys97, Cys100, and Ser307 together coordinate [4Fe-4S] cluster. Residues 79 to 296 (FNHGTATFMI…RDKANEMGFE (218 aa)) enclose the Radical SAM core domain.

It belongs to the radical SAM superfamily. Lipoyl synthase family. The cofactor is [4Fe-4S] cluster.

The protein localises to the cytoplasm. The enzyme catalyses [[Fe-S] cluster scaffold protein carrying a second [4Fe-4S](2+) cluster] + N(6)-octanoyl-L-lysyl-[protein] + 2 oxidized [2Fe-2S]-[ferredoxin] + 2 S-adenosyl-L-methionine + 4 H(+) = [[Fe-S] cluster scaffold protein] + N(6)-[(R)-dihydrolipoyl]-L-lysyl-[protein] + 4 Fe(3+) + 2 hydrogen sulfide + 2 5'-deoxyadenosine + 2 L-methionine + 2 reduced [2Fe-2S]-[ferredoxin]. The protein operates within protein modification; protein lipoylation via endogenous pathway; protein N(6)-(lipoyl)lysine from octanoyl-[acyl-carrier-protein]: step 2/2. Functionally, catalyzes the radical-mediated insertion of two sulfur atoms into the C-6 and C-8 positions of the octanoyl moiety bound to the lipoyl domains of lipoate-dependent enzymes, thereby converting the octanoylated domains into lipoylated derivatives. This is Lipoyl synthase from Haemophilus influenzae (strain 86-028NP).